A 489-amino-acid polypeptide reads, in one-letter code: Dipeptide and tripeptide permease B (489 aa).

The Cytoplasmic portion of the chain corresponds to Met-1–Arg-27. A helical transmembrane segment spans residues Phe-28 to Ser-48. Over Gln-49 to Ala-52 the chain is Periplasmic. A helical transmembrane segment spans residues Phe-53 to Val-73. Topologically, residues Gly-74–Arg-82 are cytoplasmic. The chain crosses the membrane as a helical span at residues Thr-83–Leu-103. At Lys-104–Asp-106 the chain is on the periplasmic side. Residues Leu-107 to Ala-127 form a helical membrane-spanning segment. Residues Ser-128–Thr-146 are Cytoplasmic-facing. A helical membrane pass occupies residues Leu-147–Ala-167. Residues Asp-168 to Tyr-172 lie on the Periplasmic side of the membrane. Residues Ser-173–Cys-193 form a helical membrane-spanning segment. The Cytoplasmic segment spans residues Arg-194–Ser-210. The helical transmembrane segment at Phe-211–Leu-231 threads the bilayer. Residues Met-232–His-233 are Periplasmic-facing. The helical transmembrane segment at Asn-234–Phe-254 threads the bilayer. Residues Arg-255–Lys-267 lie on the Cytoplasmic side of the membrane. Residues Met-268 to Met-288 traverse the membrane as a helical segment. Residues Pro-289–Pro-311 are Periplasmic-facing. The chain crosses the membrane as a helical span at residues Val-312–Ile-332. Topologically, residues Tyr-333–Thr-350 are cytoplasmic. Residues Leu-351–Ala-371 form a helical membrane-spanning segment. Residues Asp-372–Trp-380 are Periplasmic-facing. Residues Phe-381–Leu-401 traverse the membrane as a helical segment. Topologically, residues Ala-402–His-411 are cytoplasmic. A helical membrane pass occupies residues Leu-412–Gly-432. The Periplasmic portion of the chain corresponds to Tyr-433 to Asn-456. A helical transmembrane segment spans residues Val-457–Pro-477. At Trp-478–His-489 the chain is on the cytoplasmic side.

The protein belongs to the major facilitator superfamily. Proton-dependent oligopeptide transporter (POT/PTR) (TC 2.A.17) family. DtpB subfamily.

The protein resides in the cell inner membrane. In terms of biological role, proton-dependent permease that transports di- and tripeptides. The protein is Dipeptide and tripeptide permease B of Shigella dysenteriae serotype 1 (strain Sd197).